Reading from the N-terminus, the 383-residue chain is S-adenosylmethionine synthase (383 aa).

His-15 provides a ligand contact to ATP. Asp-17 contributes to the Mg(2+) binding site. Glu-43 contributes to the K(+) binding site. Residues Glu-56 and Gln-99 each contribute to the L-methionine site. The tract at residues 99 to 109 (QSPDINQGVDK) is flexible loop. Residues 164–166 (DAK), 230–231 (RF), Asp-239, 245–246 (RK), Ala-262, and Lys-266 each bind ATP. Asp-239 is an L-methionine binding site. Lys-270 lines the L-methionine pocket.

This sequence belongs to the AdoMet synthase family. In terms of assembly, homotetramer; dimer of dimers. The cofactor is Mg(2+). It depends on K(+) as a cofactor.

The protein localises to the cytoplasm. It carries out the reaction L-methionine + ATP + H2O = S-adenosyl-L-methionine + phosphate + diphosphate. It functions in the pathway amino-acid biosynthesis; S-adenosyl-L-methionine biosynthesis; S-adenosyl-L-methionine from L-methionine: step 1/1. In terms of biological role, catalyzes the formation of S-adenosylmethionine (AdoMet) from methionine and ATP. The overall synthetic reaction is composed of two sequential steps, AdoMet formation and the subsequent tripolyphosphate hydrolysis which occurs prior to release of AdoMet from the enzyme. The protein is S-adenosylmethionine synthase of Vibrio atlanticus (strain LGP32) (Vibrio splendidus (strain Mel32)).